The sequence spans 154 residues: MTQDNKLQVEAIRRGTVIDHIPAQVGMKLLSLFKLTATDERITIGLNLPSNQQGKKDLIKLENIFLTEEQANQLAIYAPHATVNRIDNYDVVRKQTLSLPERIDGVLTCPNSNCISRSEPVASGFRVQVHGQQVHLQCKYCEKEFEHQAVVQSA.

Zn(2+)-binding residues include Cys109, Cys114, Cys138, and Cys141.

It belongs to the PyrI family. As to quaternary structure, contains catalytic and regulatory chains. Requires Zn(2+) as cofactor.

Functionally, involved in allosteric regulation of aspartate carbamoyltransferase. This is Aspartate carbamoyltransferase regulatory chain from Sodalis glossinidius (strain morsitans).